Here is a 105-residue protein sequence, read N- to C-terminus: Cell division protein FtsB (105 aa).

At 1–3 (MGK) the chain is on the cytoplasmic side. The helical transmembrane segment at 4–21 (LTLLLLALLVWLQYSLWF) threads the bilayer. The Periplasmic portion of the chain corresponds to 22–105 (GKNGLHDYTR…QASGQQQNNR (84 aa)). Residues 33–62 (NDDVTAQQATNAKLKARNDQLFAEIDDLNG) adopt a coiled-coil conformation.

This sequence belongs to the FtsB family. Part of a complex composed of FtsB, FtsL and FtsQ.

Its subcellular location is the cell inner membrane. Functionally, essential cell division protein. May link together the upstream cell division proteins, which are predominantly cytoplasmic, with the downstream cell division proteins, which are predominantly periplasmic. This Klebsiella aerogenes (Enterobacter aerogenes) protein is Cell division protein FtsB.